Reading from the N-terminus, the 673-residue chain is DNA mismatch repair protein MutL (673 aa).

Belongs to the DNA mismatch repair MutL/HexB family.

Its function is as follows. This protein is involved in the repair of mismatches in DNA. It is required for dam-dependent methyl-directed DNA mismatch repair. May act as a 'molecular matchmaker', a protein that promotes the formation of a stable complex between two or more DNA-binding proteins in an ATP-dependent manner without itself being part of a final effector complex. The chain is DNA mismatch repair protein MutL from Ehrlichia chaffeensis (strain ATCC CRL-10679 / Arkansas).